The chain runs to 190 residues: HTH-type transcriptional repressor CutR (190 aa).

Residues 3-58 (PINRQQHILKWLKEEGSLRISDISARFGVSEMTVYRDVNQLVQSNQVIKTAGGITL) enclose the HTH deoR-type domain. A DNA-binding region (H-T-H motif) is located at residues 20–39 (LRISDISARFGVSEMTVYRD).

It localises to the cytoplasm. In terms of biological role, may act as a negative transcriptional regulator of cutJ/ycnJ in the presence of copper. May use copper as a corepressor. The sequence is that of HTH-type transcriptional repressor CutR from Bacillus subtilis (strain 168).